We begin with the raw amino-acid sequence, 324 residues long: uncharacterized protein (324 aa).

This is an uncharacterized protein from Dryophytes versicolor (chameleon treefrog).